The chain runs to 257 residues: Glutamate racemase (257 aa).

Substrate contacts are provided by residues 12 to 13 (DS) and 44 to 45 (YG). The Proton donor/acceptor role is filled by Cys75. 76–77 (NT) lines the substrate pocket. Cys186 functions as the Proton donor/acceptor in the catalytic mechanism. 187–188 (TH) lines the substrate pocket.

This sequence belongs to the aspartate/glutamate racemases family.

The enzyme catalyses L-glutamate = D-glutamate. Its pathway is cell wall biogenesis; peptidoglycan biosynthesis. In terms of biological role, provides the (R)-glutamate required for cell wall biosynthesis. This is Glutamate racemase from Clostridium kluyveri (strain NBRC 12016).